Consider the following 247-residue polypeptide: Small ribosomal subunit protein uS2 (247 aa).

It belongs to the universal ribosomal protein uS2 family.

The polypeptide is Small ribosomal subunit protein uS2 (Pseudomonas savastanoi pv. phaseolicola (strain 1448A / Race 6) (Pseudomonas syringae pv. phaseolicola (strain 1448A / Race 6))).